The sequence spans 81 residues: Conotoxin Vc6.13 (81 aa).

The signal sequence occupies residues 1 to 19 (MEKLTILLLVAAVLMSIQA). The propeptide occupies 20–44 (LNQEQHQRAKINLLSKRKAPAERWW). Cystine bridges form between cysteine 49-cysteine 63, cysteine 56-cysteine 67, and cysteine 62-cysteine 72.

It belongs to the conotoxin O2 superfamily. In terms of tissue distribution, expressed by the venom duct.

It localises to the secreted. In terms of biological role, inhibits voltage-gated ion channels. The protein is Conotoxin Vc6.13 of Conus victoriae (Queen Victoria cone).